The primary structure comprises 338 residues: MEMO1 family protein MHO1 (338 aa).

It belongs to the MEMO1 family.

The protein localises to the cytoplasm. The protein resides in the nucleus. Its function is as follows. Plays a role in haploid invasive growth under conditions of nutrient insufficiency, suggesting that the function of the MEMO1 family in cell motility/invasion is conserved across species. The chain is MEMO1 family protein MHO1 from Saccharomyces cerevisiae (strain ATCC 204508 / S288c) (Baker's yeast).